The sequence spans 924 residues: DNA repair and recombination protein RDH54 (924 aa).

Over residues 1–10 the composition is skewed to basic and acidic residues; sequence MQIPKYENKP. Disordered stretches follow at residues 1–21 and 155–183; these read MQIPKYENKPFKPPRRVGSNK and EALSQNMGNPNPPTTSTTETVPSTKNDGG. Residues 168 to 178 are compositionally biased toward low complexity; sequence TTSTTETVPST. The 189-residue stretch at 299-487 folds into the Helicase ATP-binding domain; it reads LENDSDISGC…FTIIDFINPG (189 aa). 346–353 is a binding site for ATP; it reads IPLTGLCK. A DEGH box motif is present at residues 472-475; the sequence is NDLN. Lys615 participates in a covalent cross-link: Glycyl lysine isopeptide (Lys-Gly) (interchain with G-Cter in ubiquitin). Residues 631-790 form the Helicase C-terminal domain; sequence KLRVLMTLLE…DSEMRNKESS (160 aa).

It belongs to the SNF2/RAD54 helicase family. In terms of assembly, interacts with RAD51 and DMC1.

The protein resides in the nucleus. The catalysed reaction is ATP + H2O = ADP + phosphate + H(+). In terms of biological role, involved in the recombinational repair of double-strand breaks (DSB) in DNA during mitosis and meiosis. Has DNA dependent ATPase activity. Promotes D-loop (displacement loop) formation with RAD51 recombinase. Modifies the topology of double-stranded DNA during the D-loop reaction to facilitate the invasion of the homologous duplex molecule by the initiating single-stranded DNA substrate. Required for adaptation from G2/M checkpoint arrest induced by a double strand break, by participating in monitoring the extent of single-stranded DNA produced by resection of DNA ends. This role is distinct from its roles in recombination. Promotes colocalization of RAD51 and DMC1 during meiotic recombination. Involved in crossover interference. This chain is DNA repair and recombination protein RDH54 (RDH54), found in Saccharomyces cerevisiae (strain YJM789) (Baker's yeast).